Reading from the N-terminus, the 315-residue chain is DNA-directed RNA polymerase subunit alpha (315 aa).

Positions 1–228 (MIGMEKPKIE…EHLELFISLT (228 aa)) are alpha N-terminal domain (alpha-NTD). Residues 245 to 315 (RNKLMEMTIE…FGLSLRQPDD (71 aa)) form an alpha C-terminal domain (alpha-CTD) region.

The protein belongs to the RNA polymerase alpha chain family. As to quaternary structure, homodimer. The RNAP catalytic core consists of 2 alpha, 1 beta, 1 beta' and 1 omega subunit. When a sigma factor is associated with the core the holoenzyme is formed, which can initiate transcription.

The catalysed reaction is RNA(n) + a ribonucleoside 5'-triphosphate = RNA(n+1) + diphosphate. Its function is as follows. DNA-dependent RNA polymerase catalyzes the transcription of DNA into RNA using the four ribonucleoside triphosphates as substrates. In Symbiobacterium thermophilum (strain DSM 24528 / JCM 14929 / IAM 14863 / T), this protein is DNA-directed RNA polymerase subunit alpha.